Here is a 266-residue protein sequence, read N- to C-terminus: Dolichol-phosphate mannosyltransferase subunit 1 (266 aa).

The segment covering 1 to 19 (MASPGASRGASAATAAAAS) has biased composition (low complexity). The interval 1–31 (MASPGASRGASAATAAAASPRPPQGRSSRRD) is disordered. Position 2 is an N-acetylalanine (alanine 2). Position 3 is a phosphoserine (serine 3). GDP-alpha-D-mannose-binding residues include proline 38, tyrosine 40, glutamate 42, isoleucine 69, aspartate 71, aspartate 124, alanine 125, aspartate 126, arginine 153, arginine 240, and lysine 246. Aspartate 126 contributes to the Mg(2+) binding site. Mn(2+) is bound at residue aspartate 126.

It belongs to the glycosyltransferase 2 family. As to quaternary structure, component of the dolichol-phosphate mannose (DPM) synthase complex composed of DPM1, DPM2 and DPM3; within the complex, directly interacts with DPM3. This interaction may stabilize DPM1. The cofactor is Mg(2+). Mn(2+) serves as cofactor. Ca(2+) is required as a cofactor.

The protein resides in the endoplasmic reticulum. The catalysed reaction is a di-trans,poly-cis-dolichyl phosphate + GDP-alpha-D-mannose = a di-trans,poly-cis-dolichyl beta-D-mannosyl phosphate + GDP. It participates in protein modification; protein glycosylation. Functionally, transfers mannose from GDP-mannose to dolichol monophosphate to form dolichol phosphate mannose (Dol-P-Man) which is the mannosyl donor in pathways leading to N-glycosylation, glycosyl phosphatidylinositol membrane anchoring, and O-mannosylation of proteins; catalytic subunit of the dolichol-phosphate mannose (DPM) synthase complex. This Cricetulus griseus (Chinese hamster) protein is Dolichol-phosphate mannosyltransferase subunit 1 (DPM1).